The sequence spans 248 residues: Meiotically up-regulated gene 65 protein (248 aa).

In terms of biological role, has a role in meiosis. In Schizosaccharomyces pombe (strain 972 / ATCC 24843) (Fission yeast), this protein is Meiotically up-regulated gene 65 protein (mug65).